A 120-amino-acid polypeptide reads, in one-letter code: Large ribosomal subunit protein eL8 (120 aa).

The protein belongs to the eukaryotic ribosomal protein eL8 family. Part of the 50S ribosomal subunit. Probably part of the RNase P complex.

It localises to the cytoplasm. Multifunctional RNA-binding protein that recognizes the K-turn motif in ribosomal RNA, the RNA component of RNase P, box H/ACA, box C/D and box C'/D' sRNAs. In Haloquadratum walsbyi (strain DSM 16790 / HBSQ001), this protein is Large ribosomal subunit protein eL8.